A 969-amino-acid chain; its full sequence is Dual serine/threonine and tyrosine protein kinase (969 aa).

Residues 7–37 are a coiled coil; the sequence is QEFRRYLRNRNQLQHVLEETQQALELINLEN. The Protein kinase domain occupies 632–894; it reads PHCAEEIGRG…PLLGAIVPVL (263 aa). Residues 638–646 and K662 each bind ATP; that span reads IGRGQYGIV. The active-site Proton acceptor is D760. The segment at 904-945 is disordered; that stretch reads SKSLQEVSSDKLQESSTDSRNPALALAEPYNQRGTVVSPPPT.

Belongs to the protein kinase superfamily. Ser/Thr protein kinase family.

It is found in the cytoplasm. The enzyme catalyses L-seryl-[protein] + ATP = O-phospho-L-seryl-[protein] + ADP + H(+). It carries out the reaction L-threonyl-[protein] + ATP = O-phospho-L-threonyl-[protein] + ADP + H(+). The catalysed reaction is L-tyrosyl-[protein] + ATP = O-phospho-L-tyrosyl-[protein] + ADP + H(+). This chain is Dual serine/threonine and tyrosine protein kinase, found in Apis mellifera (Honeybee).